The sequence spans 307 residues: Bifunctional protein FolD (307 aa).

Residues 165-167 (GRS), S190, and I231 contribute to the NADP(+) site.

This sequence belongs to the tetrahydrofolate dehydrogenase/cyclohydrolase family. Homodimer.

The enzyme catalyses (6R)-5,10-methylene-5,6,7,8-tetrahydrofolate + NADP(+) = (6R)-5,10-methenyltetrahydrofolate + NADPH. The catalysed reaction is (6R)-5,10-methenyltetrahydrofolate + H2O = (6R)-10-formyltetrahydrofolate + H(+). It participates in one-carbon metabolism; tetrahydrofolate interconversion. Functionally, catalyzes the oxidation of 5,10-methylenetetrahydrofolate to 5,10-methenyltetrahydrofolate and then the hydrolysis of 5,10-methenyltetrahydrofolate to 10-formyltetrahydrofolate. The protein is Bifunctional protein FolD of Koribacter versatilis (strain Ellin345).